Consider the following 140-residue polypeptide: uncharacterized protein (140 aa).

2 helical membrane-spanning segments follow: residues 26 to 43 and 64 to 86; these read YLDL…TGVI and LLNF…NGVL.

Belongs to the bacteriophage holin family. Cp-1 holin subfamily.

It localises to the cell membrane. This is an uncharacterized protein from Bacillus subtilis (strain 168).